Reading from the N-terminus, the 138-residue chain is DNA-directed RNA polymerase subunit omega (138 aa).

The disordered stretch occupies residues 104-138 (GNSDGLENSSNSRDDNPLGRDNFFSTPENRNNTNS). Polar residues predominate over residues 126–138 (FFSTPENRNNTNS).

The protein belongs to the RNA polymerase subunit omega family. The RNAP catalytic core consists of 2 alpha, 1 beta, 1 beta' and 1 omega subunit. When a sigma factor is associated with the core the holoenzyme is formed, which can initiate transcription.

The enzyme catalyses RNA(n) + a ribonucleoside 5'-triphosphate = RNA(n+1) + diphosphate. Functionally, promotes RNA polymerase assembly. Latches the N- and C-terminal regions of the beta' subunit thereby facilitating its interaction with the beta and alpha subunits. The sequence is that of DNA-directed RNA polymerase subunit omega from Ehrlichia chaffeensis (strain ATCC CRL-10679 / Arkansas).